Reading from the N-terminus, the 312-residue chain is Transcriptional regulator protein Pur-beta (312 aa).

The interval 1 to 32 is disordered; that stretch reads MADGDSGSERGGGGGPCGFQPASRGGGEQETQ. A2 carries the post-translational modification N-acetylalanine. Phosphoserine is present on residues S6 and S8. Omega-N-methylarginine is present on R24. The DNA-binding stretch occupies residues 28–254; that stretch reads EQETQELASK…LRVSEVKPSY (227 aa). Residue T31 is modified to Phosphothreonine. S101 carries the phosphoserine modification. At R152 the chain carries Omega-N-methylarginine. An N6-acetyllysine modification is found at K267. Over residues 284–295 the composition is skewed to basic and acidic residues; the sequence is ERQRDKLYERRG. Residues 284 to 312 are disordered; that stretch reads ERQRDKLYERRGGGSGGGEESEGEEVDED. R294 carries the post-translational modification Omega-N-methylarginine. 2 positions are modified to phosphoserine: S298 and S304. The span at 302 to 312 shows a compositional bias: acidic residues; the sequence is EESEGEEVDED.

The protein belongs to the PUR DNA-binding protein family. Homodimer, heterodimer with PURA and heterotrimer with PURA and YBX1/Y-box protein 1. Interacts with MYOCD and SRF. In terms of tissue distribution, expressed in myocardium of heart failure patients.

The protein localises to the nucleus. Its function is as follows. Transcriptional regulator which can act as an activator or a repressor. Represses the transcription of ACTA2 in fibroblasts and smooth muscle cells via its ability to interact with the purine-rich strand of a MCAT- containing element in the 5' flanking region of the gene. Represses the transcription of MYOCD, capable of repressing all isoforms of MYOCD but the magnitude of the repressive effects is most notable for the SMC- specific isoforms. Promotes hepatic glucose production by activating the transcription of ADCY6, leading to cAMP accumulation, increased PKA activity, CREB activation, and increased transcription of PCK1 and G6PC genes. Has capacity to bind repeated elements in single-stranded DNA such as the purine-rich single strand of the PUR element located upstream of the MYC gene. Participates in transcriptional and translational regulation of alpha-MHC expression in cardiac myocytes by binding to the purine-rich negative regulatory (PNR) element Modulates constitutive liver galectin-3 gene transcription by binding to its promoter. May play a role in the dendritic transport of a subset of mRNAs. This Homo sapiens (Human) protein is Transcriptional regulator protein Pur-beta (PURB).